A 214-amino-acid chain; its full sequence is Alpha-S1-casein (214 aa).

A signal peptide spans 1-15 (MKLLILTCLVAVALA). Ser-63, Ser-79, Ser-81, Ser-82, Ser-83, and Ser-90 each carry phosphoserine. 2 repeats span residues 85 to 99 (EIVP…IQKE) and 125 to 140 (EIVP…SMKE).

It belongs to the alpha-casein family. Mammary gland specific. Secreted in milk.

It is found in the secreted. Functionally, important role in the capacity of milk to transport calcium phosphate. In Bubalus bubalis (Domestic water buffalo), this protein is Alpha-S1-casein (CSN1S1).